A 107-amino-acid chain; its full sequence is Anti-adapter protein IraM (107 aa).

The protein belongs to the IraM/RssC family.

Its subcellular location is the cytoplasm. Functionally, inhibits RpoS proteolysis by regulating RssB activity, thereby increasing the stability of the sigma stress factor RpoS during magnesium starvation. This is Anti-adapter protein IraM from Escherichia coli (strain K12 / MC4100 / BW2952).